Reading from the N-terminus, the 89-residue chain is MTSLIAFLFTVLVIVSSVHCRMTTASTPGYGIKQEDRLCIQGQEGTKLCSSGTSRDCLNFCLIRGYAGGSCYAYTLDQCCCRIPPPKLK.

The N-terminal stretch at 1–20 is a signal peptide; it reads MTSLIAFLFTVLVIVSSVHC. Disulfide bonds link cysteine 39/cysteine 81, cysteine 49/cysteine 71, cysteine 57/cysteine 79, and cysteine 61/cysteine 80.

It belongs to the DEFL family.

It is found in the secreted. The sequence is that of Defensin-like protein 108 (LCR51) from Arabidopsis thaliana (Mouse-ear cress).